The following is a 644-amino-acid chain: Exoribonuclease 2 (644 aa).

An RNB domain is found at 189 to 516; that stretch reads REDLTALNFV…NHRLLKAIIA (328 aa). One can recognise an S1 motif domain in the interval 561 to 643; that stretch reads DERFNAEIID…ETRSVIARPA (83 aa).

The protein belongs to the RNR ribonuclease family. RNase II subfamily.

The protein resides in the cytoplasm. The catalysed reaction is Exonucleolytic cleavage in the 3'- to 5'-direction to yield nucleoside 5'-phosphates.. Functionally, involved in mRNA degradation. Hydrolyzes single-stranded polyribonucleotides processively in the 3' to 5' direction. The protein is Exoribonuclease 2 of Serratia proteamaculans (strain 568).